A 524-amino-acid chain; its full sequence is MSLLSLPWLGLRPVATSPWLLLLLVVGSWLLARILAWTYAFYNNCRRLQCFPQPPKRNWFWGHLGLITPTEEGLKNSTQMSATYSQGFTVWLGPIIPFIVLCHPDTIRSITNASAAIAPKDNLFIRFLKPWLGEGILLSGGDKWSRHRRMLTPAFHFNILKSYITIFNKSANIMLDKWQHLASEGSSRLDMFEHISLMTLDSLQKCIFSFDSHCQERPSEYIATILELSALVEKRSQHILQHMDFLYYLSHDGRRFHRACRLVHDFTDAVIRERRRTLPTQGIDDFFKDKAKSKTLDFIDVLLLSKDEDGKALSDEDIRAEADTFMFGGHDTTASGLSWVLYNLARHPEYQERCRQEVQELLKDRDPKEIEWDDLAQLPFLTMCVKESLRLHPPAPFISRCCTQDIVLPDGRVIPKGITCLIDIIGVHHNPTVWPDPEVYDPFRFDPENSKGRSPLAFIPFSAGPRNCIGQAFAMAEMKVVLALMLLHFRFLPDHTEPRRKLELIMRAEGGLWLRVEPLNVSLQ.

2 consecutive transmembrane segments (helical) span residues tryptophan 19–tyrosine 39 and glycine 87–isoleucine 107. Cysteine 468 lines the heme pocket.

Belongs to the cytochrome P450 family. It depends on heme as a cofactor. As to expression, expressed in small intestine, liver, colon and heart.

The protein resides in the endoplasmic reticulum membrane. It is found in the microsome membrane. The enzyme catalyses an organic molecule + reduced [NADPH--hemoprotein reductase] + O2 = an alcohol + oxidized [NADPH--hemoprotein reductase] + H2O + H(+). It catalyses the reaction (5Z,8Z,11Z,14Z)-eicosatetraenoate + reduced [NADPH--hemoprotein reductase] + O2 = 18-hydroxy-(5Z,8Z,11Z,14Z)-eicosatetraenoate + oxidized [NADPH--hemoprotein reductase] + H2O + H(+). It carries out the reaction (7Z,10Z,13Z,16Z,19Z)-docosapentaenoate + reduced [NADPH--hemoprotein reductase] + O2 = 10,11-epoxy-(7Z,13Z,16Z,19Z)-docosatetraenoate + oxidized [NADPH--hemoprotein reductase] + H2O + H(+). The catalysed reaction is (7Z,10Z,13Z,16Z,19Z)-docosapentaenoate + reduced [NADPH--hemoprotein reductase] + O2 = 13,14-epoxy-(7Z,10Z,16Z,19Z)-docosatetraenoate + oxidized [NADPH--hemoprotein reductase] + H2O + H(+). The enzyme catalyses (7Z,10Z,13Z,16Z,19Z)-docosapentaenoate + reduced [NADPH--hemoprotein reductase] + O2 = 16,17-epoxy-(7Z,10Z,13Z,19Z)-docosatetraenoate + oxidized [NADPH--hemoprotein reductase] + H2O + H(+). It catalyses the reaction (7Z,10Z,13Z,16Z,19Z)-docosapentaenoate + reduced [NADPH--hemoprotein reductase] + O2 = 19,20-epoxy-(7Z,10Z,13Z,16Z)-docosatetraenoate + oxidized [NADPH--hemoprotein reductase] + H2O + H(+). It carries out the reaction (4Z,7Z,10Z,13Z,16Z,19Z)-docosahexaenoate + reduced [NADPH--hemoprotein reductase] + O2 = 10,11-epoxy-(4Z,7Z,13Z,16Z,19Z)-docosapentaenoate + oxidized [NADPH--hemoprotein reductase] + H2O + H(+). The catalysed reaction is (4Z,7Z,10Z,13Z,16Z,19Z)-docosahexaenoate + reduced [NADPH--hemoprotein reductase] + O2 = 13,14-epoxy-(4Z,7Z,10Z,16Z,19Z)-docosapentaenoate + oxidized [NADPH--hemoprotein reductase] + H2O + H(+). The enzyme catalyses (4Z,7Z,10Z,13Z,16Z,19Z)-docosahexaenoate + reduced [NADPH--hemoprotein reductase] + O2 = 16,17-epoxy-(4Z,7Z,10Z,13Z,19Z)-docosapentaenoate + oxidized [NADPH--hemoprotein reductase] + H2O + H(+). It catalyses the reaction (4Z,7Z,10Z,13Z,16Z,19Z)-docosahexaenoate + reduced [NADPH--hemoprotein reductase] + O2 = 19,20-epoxy-(4Z,7Z,10Z,13Z,16Z)-docosapentaenoate + oxidized [NADPH--hemoprotein reductase] + H2O + H(+). It functions in the pathway lipid metabolism; arachidonate metabolism. Functionally, a cytochrome P450 monooxygenase involved in the metabolism of endogenous polyunsaturated fatty acids (PUFAs). Mechanistically, uses molecular oxygen inserting one oxygen atom into a substrate, and reducing the second into a water molecule, with two electrons provided by NADPH via cytochrome P450 reductase (CPR; NADPH-ferrihemoprotein reductase). Catalyzes the hydroxylation of carbon hydrogen bonds, with preference for omega-2 position. Metabolizes (5Z,8Z,11Z,14Z)-eicosatetraenoic acid (arachidonate) toward 18-hydroxy arachidonate. Catalyzes the epoxidation of double bonds of PUFAs such as docosapentaenoic and docosahexaenoic acids. Has low omega-hydroxylase activity toward leukotriene B4 and arachidonate. Involved in the metabolism of xenobiotics. Catalyzes the hydroxylation of the antihistamine drug ebastine. The sequence is that of Cytochrome P450 4F12 from Homo sapiens (Human).